A 159-amino-acid chain; its full sequence is MQKDDVAGRITAVAEQVLTPQGLELVEVEYKREGRQMVLRLFVDKPGGISLDDCAAVSRELSEILDVEDFIRENYTLEVSSPGLNRPLKKEADYERYAGRLVKVRTFELLADEEGNRRKTFLGDLVGLSDGVVTLTLREGQLARIPLDKIAKANLEFEF.

Belongs to the RimP family.

It localises to the cytoplasm. In terms of biological role, required for maturation of 30S ribosomal subunits. The chain is Ribosome maturation factor RimP from Geobacter sulfurreducens (strain ATCC 51573 / DSM 12127 / PCA).